Here is a 382-residue protein sequence, read N- to C-terminus: 1-deoxy-D-xylulose 5-phosphate reductoisomerase (382 aa).

NADPH-binding residues include Thr10, Gly11, Ser12, Ile13, Gly36, and Asn122. Residue Lys123 participates in 1-deoxy-D-xylulose 5-phosphate binding. Glu124 serves as a coordination point for NADPH. Asp148 contacts Mn(2+). 4 residues coordinate 1-deoxy-D-xylulose 5-phosphate: Ser149, Glu150, Ser174, and His197. Glu150 is a Mn(2+) binding site. Position 203 (Gly203) interacts with NADPH. 4 residues coordinate 1-deoxy-D-xylulose 5-phosphate: Ser210, Asn215, Lys216, and Glu219. Residue Glu219 participates in Mn(2+) binding.

This sequence belongs to the DXR family. Mg(2+) is required as a cofactor. The cofactor is Mn(2+).

It carries out the reaction 2-C-methyl-D-erythritol 4-phosphate + NADP(+) = 1-deoxy-D-xylulose 5-phosphate + NADPH + H(+). It participates in isoprenoid biosynthesis; isopentenyl diphosphate biosynthesis via DXP pathway; isopentenyl diphosphate from 1-deoxy-D-xylulose 5-phosphate: step 1/6. Its function is as follows. Catalyzes the NADPH-dependent rearrangement and reduction of 1-deoxy-D-xylulose-5-phosphate (DXP) to 2-C-methyl-D-erythritol 4-phosphate (MEP). The chain is 1-deoxy-D-xylulose 5-phosphate reductoisomerase from Chlorobaculum tepidum (strain ATCC 49652 / DSM 12025 / NBRC 103806 / TLS) (Chlorobium tepidum).